The sequence spans 358 residues: Sulfate/thiosulfate import ATP-binding protein CysA (358 aa).

Residues 3-237 form the ABC transporter domain; it reads IKIENLEKHF…PQTPFVTQFV (235 aa). 35–42 is a binding site for ATP; that stretch reads GPSGCGKT.

Belongs to the ABC transporter superfamily. Sulfate/tungstate importer (TC 3.A.1.6) family. The complex is composed of two ATP-binding proteins (CysA), two transmembrane proteins (CysT and CysW) and a solute-binding protein (CysP).

It is found in the cell inner membrane. It carries out the reaction sulfate(out) + ATP + H2O = sulfate(in) + ADP + phosphate + H(+). The catalysed reaction is thiosulfate(out) + ATP + H2O = thiosulfate(in) + ADP + phosphate + H(+). Functionally, part of the ABC transporter complex CysAWTP involved in sulfate/thiosulfate import. Responsible for energy coupling to the transport system. The polypeptide is Sulfate/thiosulfate import ATP-binding protein CysA (Mannheimia succiniciproducens (strain KCTC 0769BP / MBEL55E)).